Consider the following 621-residue polypeptide: Chaperone protein dnaK (621 aa).

Residues 597–621 are disordered; that stretch reads VYSSTQQDNSKTEDGSVIDTNSKEA.

It belongs to the heat shock protein 70 family.

It localises to the plastid. The protein resides in the chloroplast. Functionally, acts as a chaperone. The protein is Chaperone protein dnaK of Gracilaria tenuistipitata var. liui (Red alga).